The following is a 327-amino-acid chain: Polyprenyl transferase esdpC (327 aa).

8 helical membrane passes run 35-54 (YNPL…AGAS), 73-93 (LLVF…NDWI), 118-138 (EALI…AYTL), 140-160 (GHNV…YPFG), 171-191 (YPQY…WLAI), 202-222 (IMES…LNTA), 239-259 (VYFL…ALVL), and 307-327 (ENFA…LLKS).

The protein belongs to the UbiA prenyltransferase family. Mg(2+) serves as cofactor.

The protein localises to the membrane. It functions in the pathway secondary metabolite biosynthesis; terpenoid biosynthesis. In terms of biological role, olyprenyl transferase; part of the cluster that mediates the biosynthesis of shearones, diterpenoid pyrones (DPs) which are structurally diverse meroterpenoids consisting of a diterpene linked by a pyrone, and which may exhibit a range of bioactivities. Within the pathway, esdpC takes part to the biosynthesis of the molecular scaffold by catalyzing the C-3 geranylgeranylation reaction of the alpha-pyrone produced by esdpA. The molecular scaffold is commonly biosynthesized by a series of enzymes including the non-reducing polyketide synthase (NR-PKS) esdpA that generates an alpha-pyrone; the prenyltransferase esdpC that attaches a geranylgeranyl pyrophosphate (GGPP) produced by the GGPP synthase (GGPPS) esdpD onto the pyrone unit; the FAD-dependent monooxygenase esdpE that converts an olefin on the diterpene unit into an epoxide; and the terpene cyclase esdpB that catalyzes the cyclization reactions to give the molecular backbone shearone A. In the modification steps, esdpF oxidizes the hydroxy group to a ketone at C-3 and esdpG then attaches hydroxy groups at both C-11 and C-12. After that, esdpI hydroxylates at C-20 and esdpH hydroxylates at C-6'. The ether bridge is generated by nucleophilic attack of the hydroxy group at C-20 to the carbonyl carbon at C-3. EsdpH can also functions prior to esdpI. The different combinations of these modification enzymes lead to the production of diverse shearone derivatives, shearone I being the end product of the pathway. The alpha-ketoglutarate-dependent dioxygenase esdpJ seems not to be involved in this pathway. This is Polyprenyl transferase esdpC from Penicillium shearii (Eupenicillium shearii).